The sequence spans 344 residues: Heat-inducible transcription repressor HrcA (344 aa).

It belongs to the HrcA family.

Its function is as follows. Negative regulator of class I heat shock genes (grpE-dnaK-dnaJ and groELS operons). Prevents heat-shock induction of these operons. The chain is Heat-inducible transcription repressor HrcA from Streptococcus pneumoniae (strain ATCC 700669 / Spain 23F-1).